The following is a 356-amino-acid chain: Methionine import ATP-binding protein MetN 1 (356 aa).

The ABC transporter domain maps to 2 to 241 (IELKNISVTF…PQQPLTKDFI (240 aa)). 38-45 (GYSGAGKS) is an ATP binding site.

The protein belongs to the ABC transporter superfamily. Methionine importer (TC 3.A.1.24) family. As to quaternary structure, the complex is composed of two ATP-binding proteins (MetN), two transmembrane proteins (MetI) and a solute-binding protein (MetQ).

The protein localises to the cell membrane. It catalyses the reaction L-methionine(out) + ATP + H2O = L-methionine(in) + ADP + phosphate + H(+). The enzyme catalyses D-methionine(out) + ATP + H2O = D-methionine(in) + ADP + phosphate + H(+). In terms of biological role, part of the ABC transporter complex MetNIQ involved in methionine import. Responsible for energy coupling to the transport system. The sequence is that of Methionine import ATP-binding protein MetN 1 from Enterococcus faecalis (strain ATCC 700802 / V583).